Consider the following 293-residue polypeptide: Glutamyl-Q tRNA(Asp) synthetase (293 aa).

Residues 8–12 (RFAPS) and Glu44 each bind L-glutamate. A 'HIGH' region motif is present at residues 11-21 (PSPSGPLHAGS). Zn(2+) contacts are provided by Cys98, Cys100, Tyr120, and Cys124. Residues Tyr183 and Arg201 each coordinate L-glutamate. The 'KMSKS' region motif lies at 239-243 (KLSKQ). Lys242 serves as a coordination point for ATP.

It belongs to the class-I aminoacyl-tRNA synthetase family. GluQ subfamily. Zn(2+) is required as a cofactor.

Catalyzes the tRNA-independent activation of glutamate in presence of ATP and the subsequent transfer of glutamate onto a tRNA(Asp). Glutamate is transferred on the 2-amino-5-(4,5-dihydroxy-2-cyclopenten-1-yl) moiety of the queuosine in the wobble position of the QUC anticodon. In Janthinobacterium sp. (strain Marseille) (Minibacterium massiliensis), this protein is Glutamyl-Q tRNA(Asp) synthetase.